The following is a 507-amino-acid chain: Maturase K (507 aa).

It belongs to the intron maturase 2 family. MatK subfamily.

The protein localises to the plastid. The protein resides in the chloroplast. Functionally, usually encoded in the trnK tRNA gene intron. Probably assists in splicing its own and other chloroplast group II introns. This chain is Maturase K, found in Humulus lupulus (European hop).